Reading from the N-terminus, the 471-residue chain is Cytolysin (471 aa).

Residues 1 to 20 (MKKMTLFTLSLLATAVQVGA) form the signal peptide. In terms of domain architecture, Ricin B-type lectin spans 338-465 (AHVTLQSLSN…EANQARWKPT (128 aa)).

This sequence belongs to the HlyA hemolysin family.

Bacterial hemolysins are exotoxins that attack blood cell membranes and cause cell rupture by mechanisms not clearly defined. The sequence is that of Cytolysin (vvhA) from Vibrio vulnificus (strain CMCP6).